The following is a 413-amino-acid chain: MSGVAEPDCYLTYDITSDTLTLYVPDFDLRRAIWMGPTLGLAEARERYNIDQAKYRSTLEQDILDWASRRAIGSVIYVIHDNQKPVVPFPYLKFNHEDLIPAMDTCREIKDGHEIGLIRRANEISTSAHTEILRNISGMRNEAEIQGKFLDSCVSLGAKNQSYEIIAASGENAAVLHYTRNDEPLKGRQLVCLDAGAEWNCYASDVTRTFPMQPRWPSAEAFSVYSVVQRMQEECIKRISEGVRYLDLHILAHKIAIEELLRLGIFRGGSIAEILKSGASLVFFPHGLGHHVGLEVHDVSGRSLMALEEQEYQGLPLRGCRAPCTLSAPHLRAGMVVTVEPGIYFSRLALDDAKQKPLSKYIDMQLVAEYIPVGGVRIEDDVLVTRDGWENLTSAPKGRAMLDIIGEGARLRA.

4 residues coordinate Mn(2+): D194, D205, E340, and E379.

It belongs to the peptidase M24B family. It depends on Mn(2+) as a cofactor.

It carries out the reaction Release of any N-terminal amino acid, including proline, that is linked to proline, even from a dipeptide or tripeptide.. In terms of biological role, catalyzes the removal of a penultimate prolyl residue from the N-termini of peptides. The polypeptide is Probable Xaa-Pro aminopeptidase UREG_07123 (Uncinocarpus reesii (strain UAMH 1704)).